A 327-amino-acid polypeptide reads, in one-letter code: MAMTAEVKDELSRLVVTQVSSRRAEVASLLRFAGGLHIVSGRVVVEAEVDQGSIARRLRKDIFDLYGYNAVVHVLSAGGIRKTTRYVVRVAKDGEALARQTGLLDLRGRPVRGLPAQVVGGSVADAEAAWRGAFLAHGSLTEPGRSSALEVSCPGPEAALALVGAARRLGVSAKAREVRGSDRVVVRDGEAIGALLTRMGAQDTRLTWEERRMRREVRATANRLANFDDANLRRSARAAVAAAARVERALEILGDTVPDHLAAAGKLRVEHRQASLEELGRLADPVMTKDAVAGRIRRLLSMADRKAKTEGIPDTESAVTPELLEEA.

The segment at residues 275–308 (SLEELGRLADPVMTKDAVAGRIRRLLSMADRKAK) is a DNA-binding region (H-T-H motif). Residues 307–327 (AKTEGIPDTESAVTPELLEEA) are disordered.

It belongs to the WhiA family.

In terms of biological role, involved in cell division and chromosome segregation. In Mycobacteroides abscessus (strain ATCC 19977 / DSM 44196 / CCUG 20993 / CIP 104536 / JCM 13569 / NCTC 13031 / TMC 1543 / L948) (Mycobacterium abscessus), this protein is Probable cell division protein WhiA.